The sequence spans 169 residues: Transcription antitermination protein NusB (169 aa).

A disordered region spans residues 1–20 (MAESSNKPFRGPVRANDRKA).

This sequence belongs to the NusB family.

Functionally, involved in transcription antitermination. Required for transcription of ribosomal RNA (rRNA) genes. Binds specifically to the boxA antiterminator sequence of the ribosomal RNA (rrn) operons. This is Transcription antitermination protein NusB from Bradyrhizobium sp. (strain BTAi1 / ATCC BAA-1182).